The sequence spans 475 residues: MSPQTETKTGVGFKAGVKDYRLTYYTPEYETKETDILAAFRMTPQPGVPPEEAGAAVAAESSTGTWTTVWTDGLTSLDRYKGRCYDIEPVAGEENQYIAYVAHPLDLFEEGSVTNLFTSIVGNVFGFKASRALRLEDLRIPPSYVKTFQGPPHGIQVERDKLNKYGRPLLGCTIKPKLGLSAKNYGRAVYECLRGGLDFTKDDENVNSQPFMRWRDRFLFVAEALFKSQAETGEIKGHYLNATAGTSEEMMKRAACARELGVPIVMHDYLTGGFTANTSLAHHCRDNGLLLHIHRAMHAVIDRQKNHGMHFRVSAKALRLSGGDHIHAGTVVGKLEGERDVTLGFVDLLRDDYIEKDRSRGVYFTQDWVSLPGVLPVASGGIHVWHMPALTEIFGDDSVLQFGGGTLGHPWGNAPGAVANRVASEACVQARNEGRDLAREGNEIIREAAKWSPDLAAACEVWKEIKFEYETMNTL.

Positions 1-2 (MS) are excised as a propeptide. Pro-3 is subject to N-acetylproline. Lys-14 carries the N6,N6,N6-trimethyllysine modification. Positions 123 and 173 each coordinate substrate. The Proton acceptor role is filled by Lys-175. Lys-177 serves as a coordination point for substrate. The Mg(2+) site is built by Lys-201, Asp-203, and Glu-204. Lys-201 carries the post-translational modification N6-carboxylysine. His-294 (proton acceptor) is an active-site residue. Residues Arg-295, His-327, and Ser-379 each contribute to the substrate site.

Belongs to the RuBisCO large chain family. Type I subfamily. As to quaternary structure, heterohexadecamer of 8 large chains and 8 small chains. It depends on Mg(2+) as a cofactor.

The protein localises to the plastid. Its subcellular location is the chloroplast. The enzyme catalyses 2 (2R)-3-phosphoglycerate + 2 H(+) = D-ribulose 1,5-bisphosphate + CO2 + H2O. The catalysed reaction is D-ribulose 1,5-bisphosphate + O2 = 2-phosphoglycolate + (2R)-3-phosphoglycerate + 2 H(+). RuBisCO catalyzes two reactions: the carboxylation of D-ribulose 1,5-bisphosphate, the primary event in carbon dioxide fixation, as well as the oxidative fragmentation of the pentose substrate in the photorespiration process. Both reactions occur simultaneously and in competition at the same active site. The chain is Ribulose bisphosphate carboxylase large chain from Bazzania trilobata (Greater whipwort).